We begin with the raw amino-acid sequence, 302 residues long: RELT-like protein 2 (302 aa).

Residues Leu-15–Ile-35 traverse the membrane as a helical segment. Disordered stretches follow at residues Arg-47 to Asn-68, Cys-135 to Phe-164, Arg-177 to Arg-212, and Val-247 to Met-302. Ser-52 is modified (phosphoserine). Composition is skewed to basic and acidic residues over residues Arg-148–Pro-158 and Arg-177–Pro-188. Positions Gln-277 to Ser-294 are enriched in polar residues.

Belongs to the RELT family. Interacts with RELT, RELL1, OXSR1, PLSCR1 and TRAF2.

It localises to the cell membrane. In terms of biological role, induces activation of MAPK14/p38 cascade, when overexpressed. Induces apoptosis, when overexpressed. This Rattus norvegicus (Rat) protein is RELT-like protein 2 (Rell2).